Reading from the N-terminus, the 40-residue chain is uncharacterized protein (40 aa).

This is an uncharacterized protein from Haemophilus influenzae (strain ATCC 51907 / DSM 11121 / KW20 / Rd).